Consider the following 459-residue polypeptide: Zinc finger protein ZPR1 (459 aa).

Positions 1–29 (MSAGGAVEPGLPAAAAAPSAAPARDPGPG) are enriched in low complexity. The tract at residues 1–43 (MSAGGAVEPGLPAAAAAPSAAPARDPGPGHLFRPISAEDEEQQ) is disordered. C4-type zinc fingers lie at residues 51-83 (CMNCYRNGMTRLLLTKIPFFREIIVSSFSCEHC) and 259-291 (CPECNAPAQTNMKLVQIPHFKEVIIMATNCENC). The interval 438-459 (NEELGLNDMKTEGYETGLPAQR) is disordered.

The protein belongs to the ZPR1 family. In terms of assembly, component of an import snRNP complex composed of KPNB1, SNUPN, SMN1 and ZNF259. Interacts (via C-terminal region) with SMN1 (via C-terminal region); the interaction occurs after treatment with serum. Interacts with elongation factor 1-alpha EEF1A1; the interaction occurs in a epidermal growth factor (EGF)-dependent manner. Interacts (via zinc fingers) with EGFR (via C-terminal cytoplasmic kinase domain); the interaction is negatively regulated in response to epidermal growth factor (EGF) stimulation and EGFR kinase activity. May also bind to the PDGFR receptor.

It is found in the nucleus. The protein resides in the cytoplasm. Its subcellular location is the nucleolus. The protein localises to the perinuclear region. It localises to the gem. It is found in the cajal body. The protein resides in the cell projection. Its subcellular location is the axon. The protein localises to the growth cone. Its function is as follows. Acts as a signaling molecule that communicates proliferative growth signals from the cytoplasm to the nucleus. Plays a role for the localization and accumulation of the survival motor neuron protein SMN1 in sub-nuclear bodies, including gems and Cajal bodies. Induces neuron differentiation and stimulates axonal growth and formation of growth cone in spinal cord motor neurons. Plays a role in the splicing of cellular pre-mRNAs. May be involved in H(2)O(2)-induced neuronal cell death. The chain is Zinc finger protein ZPR1 (ZNF259) from Bos taurus (Bovine).